Reading from the N-terminus, the 153-residue chain is Aspartate carbamoyltransferase regulatory chain (153 aa).

Zn(2+)-binding residues include Cys109, Cys114, Cys138, and Cys141.

Belongs to the PyrI family. In terms of assembly, contains catalytic and regulatory chains. Zn(2+) is required as a cofactor.

Functionally, involved in allosteric regulation of aspartate carbamoyltransferase. This chain is Aspartate carbamoyltransferase regulatory chain, found in Vibrio campbellii (strain ATCC BAA-1116).